The primary structure comprises 190 residues: Cancer-related nucleoside-triphosphatase (190 aa).

Alanine 2 is modified (N-acetylalanine). ATP contacts are provided by residues 9–16 (GPPGVGKT) and 109–116 (VCVIDEIG). N6-acetyllysine is present on lysine 165.

It belongs to the THEP1 NTPase family. Monomer.

It catalyses the reaction a ribonucleoside 5'-triphosphate + H2O = a ribonucleoside 5'-diphosphate + phosphate + H(+). The catalysed reaction is 5-methyl-UTP + H2O = 5-methyl-UDP + phosphate + H(+). It carries out the reaction CTP + H2O = CDP + phosphate + H(+). The enzyme catalyses ATP + H2O = ADP + phosphate + H(+). It catalyses the reaction GTP + H2O = GDP + phosphate + H(+). Its function is as follows. Has nucleotide phosphatase activity towards ATP, GTP, CTP, TTP and UTP. Hydrolyzes nucleoside diphosphates with lower efficiency. This chain is Cancer-related nucleoside-triphosphatase, found in Homo sapiens (Human).